The primary structure comprises 199 residues: Interleukin-11 (199 aa).

The first 21 residues, 1–21, serve as a signal peptide directing secretion; that stretch reads MNCVCRLVLVVLSLWPDTAVA. The segment at 182–190 is important for interaction with IL11RA and for the stimulation of cell proliferation; sequence HLTLDWAVR.

This sequence belongs to the IL-6 superfamily. Interacts with IL11RA to associate with IL6ST, giving rise to a multimeric signaling complex.

Its subcellular location is the secreted. Its function is as follows. Cytokine that stimulates the proliferation of hematopoietic stem cells and megakaryocyte progenitor cells and induces megakaryocyte maturation resulting in increased platelet production. Also promotes the proliferation of hepatocytes in response to liver damage. Binding to its receptor formed by IL6ST and IL11RA activates a signaling cascade that promotes cell proliferation. Signaling leads to the activation of intracellular protein kinases and the phosphorylation of STAT3. The interaction with the membrane-bound IL11RA and IL6ST stimulates 'classic signaling', whereas the binding of IL11 and soluble IL11RA to IL6ST stimulates 'trans-signaling'. This chain is Interleukin-11 (IL11), found in Macaca fascicularis (Crab-eating macaque).